The chain runs to 500 residues: Glycerol kinase (500 aa).

Thr13 provides a ligand contact to ADP. Residues Thr13, Thr14, and Ser15 each coordinate ATP. Residue Thr13 coordinates sn-glycerol 3-phosphate. Residue Arg17 participates in ADP binding. The sn-glycerol 3-phosphate site is built by Arg83, Glu84, Tyr135, and Asp244. Glycerol-binding residues include Arg83, Glu84, Tyr135, Asp244, and Gln245. ADP is bound by residues Thr266 and Gly309. ATP is bound by residues Thr266, Gly309, Gln313, and Gly410. ADP contacts are provided by Gly410 and Asn414.

Belongs to the FGGY kinase family.

It catalyses the reaction glycerol + ATP = sn-glycerol 3-phosphate + ADP + H(+). Its pathway is polyol metabolism; glycerol degradation via glycerol kinase pathway; sn-glycerol 3-phosphate from glycerol: step 1/1. Its activity is regulated as follows. Inhibited by fructose 1,6-bisphosphate (FBP). In terms of biological role, key enzyme in the regulation of glycerol uptake and metabolism. Catalyzes the phosphorylation of glycerol to yield sn-glycerol 3-phosphate. The sequence is that of Glycerol kinase from Burkholderia ambifaria (strain MC40-6).